The primary structure comprises 137 residues: Fluoride-specific ion channel FluC 1 (137 aa).

4 helical membrane passes run 4 to 24, 37 to 57, 67 to 87, and 98 to 118; these read LIYI…YYLG, LATL…TTYI, VITG…TLSV, and WGIA…MSGL. The Na(+) site is built by G77 and T80.

It belongs to the fluoride channel Fluc/FEX (TC 1.A.43) family.

It localises to the cell membrane. It catalyses the reaction fluoride(in) = fluoride(out). With respect to regulation, na(+) is not transported, but it plays an essential structural role and its presence is essential for fluoride channel function. Functionally, fluoride-specific ion channel. Important for reducing fluoride concentration in the cell, thus reducing its toxicity. This is Fluoride-specific ion channel FluC 1 from Bacillus anthracis.